The primary structure comprises 332 residues: Azadirone synthase LFS (332 aa).

Residues 181–286 (ANANYTNMFH…RYSTGTFICP (106 aa)) form the Fe2OG dioxygenase domain. The Fe cation site is built by histidine 208, aspartate 210, and histidine 269. Arginine 277 contributes to the 2-oxoglutarate binding site.

It belongs to the iron/ascorbate-dependent oxidoreductase family. It depends on Fe(2+) as a cofactor. As to expression, mainly expressed in petioles and, to a lower extent, in roots.

It catalyses the reaction (1S,3bR,4R,5aR,9aR,9bR,11aS)-1-(1-hydroxy-4-oxobutan-2-yl)-3b,6,6,9a,11a-pentamethyl-7-oxo-1H,2H,3bH,4H,5H,5aH,6H,7H,9aH,9bH,10H,11H,11aH-cyclopenta[a]phenanthren-4-yl acetate + 2-oxoglutarate + O2 = azadirone + succinate + CO2 + 2 H2O. It participates in secondary metabolite biosynthesis; terpenoid biosynthesis. 2-oxoglutarate-Fe(II) type oxidoreductase involved in the biosynthesis of limonoids triterpene natural products such as azadirachtin, an antifeedant widely used as bioinsecticide, and possessing many medicinal applications including anti-tumoral, anti-malarial, anti-rheumatic, antibacterial, anti-inflammatory, anti-pyretic and diuretic effects. Catalyzes the formation of azadirone. The chain is Azadirone synthase LFS from Melia azedarach (Chinaberry tree).